The following is a 363-amino-acid chain: Phosphoribosylformylglycinamidine cyclo-ligase (363 aa).

Belongs to the AIR synthase family.

The protein resides in the cytoplasm. It carries out the reaction 2-formamido-N(1)-(5-O-phospho-beta-D-ribosyl)acetamidine + ATP = 5-amino-1-(5-phospho-beta-D-ribosyl)imidazole + ADP + phosphate + H(+). The protein operates within purine metabolism; IMP biosynthesis via de novo pathway; 5-amino-1-(5-phospho-D-ribosyl)imidazole from N(2)-formyl-N(1)-(5-phospho-D-ribosyl)glycinamide: step 2/2. The sequence is that of Phosphoribosylformylglycinamidine cyclo-ligase from Brucella anthropi (strain ATCC 49188 / DSM 6882 / CCUG 24695 / JCM 21032 / LMG 3331 / NBRC 15819 / NCTC 12168 / Alc 37) (Ochrobactrum anthropi).